Here is a 353-residue protein sequence, read N- to C-terminus: Sulfate/thiosulfate import ATP-binding protein CysA (353 aa).

In terms of domain architecture, ABC transporter spans 3 to 237 (IQVKNIEKHF…PATPFVFDFL (235 aa)). An ATP-binding site is contributed by 35–42 (GPSGCGKT).

This sequence belongs to the ABC transporter superfamily. Sulfate/tungstate importer (TC 3.A.1.6) family. As to quaternary structure, the complex is composed of two ATP-binding proteins (CysA), two transmembrane proteins (CysT and CysW) and a solute-binding protein (CysP).

The protein localises to the cell inner membrane. The catalysed reaction is sulfate(out) + ATP + H2O = sulfate(in) + ADP + phosphate + H(+). It catalyses the reaction thiosulfate(out) + ATP + H2O = thiosulfate(in) + ADP + phosphate + H(+). Part of the ABC transporter complex CysAWTP involved in sulfate/thiosulfate import. Responsible for energy coupling to the transport system. The polypeptide is Sulfate/thiosulfate import ATP-binding protein CysA (Acinetobacter baylyi (strain ATCC 33305 / BD413 / ADP1)).